We begin with the raw amino-acid sequence, 138 residues long: Large ribosomal subunit protein uL16 (138 aa).

This sequence belongs to the universal ribosomal protein uL16 family. As to quaternary structure, part of the 50S ribosomal subunit.

Its function is as follows. Binds 23S rRNA and is also seen to make contacts with the A and possibly P site tRNAs. The protein is Large ribosomal subunit protein uL16 of Ureaplasma urealyticum serovar 10 (strain ATCC 33699 / Western).